The following is a 177-amino-acid chain: Endoribonuclease YbeY (177 aa).

H142, H146, and H152 together coordinate Zn(2+).

It belongs to the endoribonuclease YbeY family. Requires Zn(2+) as cofactor.

The protein resides in the cytoplasm. In terms of biological role, single strand-specific metallo-endoribonuclease involved in late-stage 70S ribosome quality control and in maturation of the 3' terminus of the 16S rRNA. This is Endoribonuclease YbeY from Synechococcus sp. (strain CC9311).